The primary structure comprises 464 residues: UDP-N-acetylmuramate--L-alanine ligase (464 aa).

An ATP-binding site is contributed by glycine 111 to threonine 117.

It belongs to the MurCDEF family.

It localises to the cytoplasm. It carries out the reaction UDP-N-acetyl-alpha-D-muramate + L-alanine + ATP = UDP-N-acetyl-alpha-D-muramoyl-L-alanine + ADP + phosphate + H(+). Its pathway is cell wall biogenesis; peptidoglycan biosynthesis. In terms of biological role, cell wall formation. This chain is UDP-N-acetylmuramate--L-alanine ligase, found in Dictyoglomus turgidum (strain DSM 6724 / Z-1310).